The following is a 179-amino-acid chain: Lebocin-4 (179 aa).

An N-terminal signal peptide occupies residues 1-16 (MYKFLVFSSVLVLFFA). A propeptide spanning residues 17 to 120 (QASCQRFIQP…RPIESHRNTR (104 aa)) is cleaved from the precursor. Threonine 135 is a glycosylation site (O-linked (GalNAc...) threonine). Residues 153-179 (RRHASDDQEELRHHNEHFLIPRDILQD) constitute a propeptide that is removed on maturation.

Belongs to the lebocin family. Post-translationally, O-glycosylation is important for the antibacterial activity of lebocin. In terms of tissue distribution, hemolymph. Produced in fat body.

Its subcellular location is the secreted. Its function is as follows. Antibacterial peptide. The chain is Lebocin-4 (LEB4) from Bombyx mori (Silk moth).